The following is a 106-amino-acid chain: Iron-sulfur cluster assembly protein CyaY (106 aa).

It belongs to the frataxin family.

Its function is as follows. Involved in iron-sulfur (Fe-S) cluster assembly. May act as a regulator of Fe-S biogenesis. The protein is Iron-sulfur cluster assembly protein CyaY of Salmonella dublin (strain CT_02021853).